A 259-amino-acid chain; its full sequence is Energy-coupling factor transporter ATP-binding protein EcfA1 (259 aa).

Residues 3 to 230 (ITLNSVSFRY…EFDDVEIPFK (228 aa)) enclose the ABC transporter domain. An ATP-binding site is contributed by 38 to 43 (GSGKTT). Glutamate 157 serves as the catalytic Proton acceptor.

The protein belongs to the ABC transporter superfamily. Energy-coupling factor EcfA family. In terms of assembly, forms a heterodimer with EcfA2. Forms a stable energy-coupling factor (ECF) transporter complex composed of 2 membrane-embedded substrate-binding proteins (S component, RibU, BioY), 2 ATP-binding proteins (A component) and 2 transmembrane proteins (T component) upon coexpression in E.coli. Stable subcomplexes with both A plus T components can also be isolated. This complex interacts with at least 2 substrate-specific components, BioY and RibU.

The protein localises to the cell inner membrane. ATP-binding (A) component of a common energy-coupling factor (ECF) ABC-transporter complex. Unlike classic ABC transporters this ECF transporter provides the energy necessary to transport a number of different substrates. Expression of the complex plus RibU in E.coli allows riboflavin uptake; uptake does not occur in the absence of RibU or the EcfA1A2T complex. This chain is Energy-coupling factor transporter ATP-binding protein EcfA1, found in Thermotoga maritima (strain ATCC 43589 / DSM 3109 / JCM 10099 / NBRC 100826 / MSB8).